The following is a 685-amino-acid chain: Kinesin-related protein 11 (685 aa).

One can recognise a Kinesin motor domain in the interval 4 to 405; the sequence is NISVSVRARP…LKFASRAKKI (402 aa). Residues 36–105 are disordered; it reads TSLPPPITQP…TTVPASPAPT (70 aa). Residues 47–105 show a composition bias toward low complexity; it reads SSLPPISTPIKSSSSSSTSTSAGSLKTPLKTPLKTPLKTPLKTNSTTTNTTVPASPAPT. 156-163 serves as a coordination point for ATP; that stretch reads GITSSGKT. Positions 411 to 488 form a coiled coil; sequence VNEILDDKAL…KINNLNKLIL (78 aa). The interval 495 to 568 is disordered; sequence NSASKGGSGS…QSTSSLTIGG (74 aa). Positions 511-520 are enriched in polar residues; that stretch reads RSTFVSPSQN. Low complexity predominate over residues 533–565; that stretch reads PNSFSNLLLQSPSQNNNNNSHISPLSQSTSSLT. The stretch at 574 to 683 forms a coiled coil; it reads FESNELIQIQ…LKSKIQEYEV (110 aa).

This sequence belongs to the TRAFAC class myosin-kinesin ATPase superfamily. Kinesin family.

Its subcellular location is the cytoplasm. It is found in the cytoskeleton. Functionally, microtubule-associated force-producing protein that plays a role in organelle transport. Its motor activity is directed toward the microtubule's plus end. This chain is Kinesin-related protein 11 (kif11), found in Dictyostelium discoideum (Social amoeba).